A 454-amino-acid polypeptide reads, in one-letter code: Pup--protein ligase (454 aa).

Glu-9 serves as a coordination point for Mg(2+). Arg-53 is a binding site for ATP. Residue Tyr-55 participates in Mg(2+) binding. The Proton acceptor role is filled by Asp-57. Glu-63 serves as a coordination point for Mg(2+). Positions 66 and 420 each coordinate ATP.

The protein belongs to the Pup ligase/Pup deamidase family. Pup-conjugating enzyme subfamily.

It carries out the reaction ATP + [prokaryotic ubiquitin-like protein]-L-glutamate + [protein]-L-lysine = ADP + phosphate + N(6)-([prokaryotic ubiquitin-like protein]-gamma-L-glutamyl)-[protein]-L-lysine.. It participates in protein degradation; proteasomal Pup-dependent pathway. Its pathway is protein modification; protein pupylation. Catalyzes the covalent attachment of the prokaryotic ubiquitin-like protein modifier Pup to the proteasomal substrate proteins, thereby targeting them for proteasomal degradation. This tagging system is termed pupylation. The ligation reaction involves the side-chain carboxylate of the C-terminal glutamate of Pup and the side-chain amino group of a substrate lysine. The chain is Pup--protein ligase from Arthrobacter sp. (strain FB24).